The primary structure comprises 94 residues: ESAT-6-like protein EsxL (94 aa).

It belongs to the WXG100 family. ESAT-6 subfamily. As to quaternary structure, strongly interacts with EsxK to form a heterodimeric complex under reducing conditions. The complex is regulated by the redox state of EsxL.

The protein localises to the secreted. In terms of biological role, induces apoptosis of host cells. Is immunogenic with highly specific seroreactivity towards TB patients' serum. In Mycobacterium tuberculosis (strain ATCC 25618 / H37Rv), this protein is ESAT-6-like protein EsxL.